Here is a 116-residue protein sequence, read N- to C-terminus: Somatostatin (116 aa).

Positions 1–24 are cleaved as a signal peptide; sequence MLSCRLQCALAALSIVLALGGVTG. A propeptide spanning residues 25 to 88 is cleaved from the precursor; it reads APSDPRLRQF…QDEMRLELQR (64 aa). Residue A43 is modified to Alanine amide. C105 and C116 are oxidised to a cystine.

It belongs to the somatostatin family. Post-translationally, C-terminal amidation of the neuronostatin peptide is required for its biological activity, including for the regulation of mean arterial pressure.

The protein resides in the secreted. Functionally, inhibits the secretion of pituitary hormones, including that of growth hormone/somatotropin (GH1), PRL, ACTH, luteinizing hormone (LH) and TSH. Also impairs ghrelin- and GnRH-stimulated secretion of GH1 and LH; the inhibition of ghrelin-stimulated secretion of GH1 can be further increased by neuronostatin. Its function is as follows. May enhance low-glucose-induced glucagon release by pancreatic alpha cells. This effect may be mediated by binding to GPR107 and PKA activation. May regulate cardiac contractile function. May compromise cardiomyocyte viability. In the central nervous system, may impair memory retention and may affect hippocampal excitability. May also have anxiolytic and anorexigenic effects. May play a role in arterial pressure regulation. May inhibit basal, but not ghrelin- or GnRH-stimulated secretion of GH1 or LH, but does not affect the release of other pituitary hormones, including PRL, ACTH, FSH or TSH. Potentiates inhibitory action of somatostatin on ghrelin-stimulated secretion of GH1, but not that on GnRH-stimulated secretion of LH. In Bos taurus (Bovine), this protein is Somatostatin (SST).